The following is a 351-amino-acid chain: MPYITDMLRDRNSAATPPAEERSEPVPVGAFDARRLSKALSSKIVGQQAAVDAVVRAISIAHVGATDPTRPLANILLVGPTGVGKTELVRRVAAELRSGPDDLCRIDMNALAQEHYAASFSGAPPGYAGSKESFTLFDKNTVEGDPYTPGIVLFDEVEKADPTVLRALLQVLDNGELRLANGQQKISFRNSYVFLTSNLGSAAVAERRRSHLRQLADRVRIDRPRHGHHLVQRALEKFFDPEFFNRIDETVILDEFDDQTAEQVTRLEIELITTRLARRGIDVEVDDSAVALLQRRGFDPVYGARGLRRTIRNVLADPVAGAVLDLRPVGTQPLALQARAVGDQIQVKKAP.

Residues 1–26 (MPYITDMLRDRNSAATPPAEERSEPV) form a disordered region. Residue 79 to 86 (GPTGVGKT) coordinates ATP.

The protein belongs to the ClpA/ClpB family.

This is ATP-dependent protease ATP-binding subunit-like protein from Rhodococcus erythropolis (Arthrobacter picolinophilus).